Consider the following 181-residue polypeptide: Histone deacetylase complex subunit SAP30L-A (181 aa).

2 cysteine pairs are disulfide-bonded: Cys-26–Cys-27 and Cys-35–Cys-71. An Atypical zinc finger spans residues 26–74 (CCLIDGGERCPRPAGNASFSKRVQKSISQKKLKLDIDKNVRHLYICDFH). A disordered region spans residues 82 to 103 (RNKRKRKTSDDGGDSPEHETDI). A Nuclear localization signal (NLS) motif is present at residues 83-88 (NKRKRK). Residues 85–87 (RKR) are important for DNA and phosphoinositide binding.

The protein belongs to the SAP30 family. In terms of assembly, interacts with components of the histone deacetylase complex sin3a, hdac1 and hdac2. Binds histones and nucleosomes.

It is found in the nucleus. The protein localises to the nucleolus. Its function is as follows. Functions as a transcription repressor, probably via its interaction with histone deacetylase complexes. Involved in the functional recruitment of the class 1 Sin3-histone deacetylase complex (HDAC) to the nucleolus. Binds DNA, apparently without sequence-specificity, and bends bound double-stranded DNA. Binds phosphoinositol phosphates (phosphoinositol 3-phosphate, phosphoinositol 4-phosphate and phosphoinositol 5-phosphate) via the same basic sequence motif that mediates DNA binding and nuclear import. The protein is Histone deacetylase complex subunit SAP30L-A (sap30l-a) of Xenopus laevis (African clawed frog).